A 196-amino-acid chain; its full sequence is MNVVILDTGCANLSSVKSAVARHGYTPVVSREAEIVLRADKLFLPGVGTAQAAMDQLRERELIDLIKACTQPVLGICLGMQLLGRRSEETRGVDLLNIIEQDVPKMTDFGLPLPHMGWNRVYPQAGNRLFQGIEDGAYFYFVHSYAMPVNPWTIAQCNYGEPFTAAVQKDNFFGVQFHPERSGAAGAQLLKNFLEM.

Residues 2 to 196 (NVVILDTGCA…AQLLKNFLEM (195 aa)) form the Glutamine amidotransferase type-1 domain. Catalysis depends on C77, which acts as the Nucleophile. Active-site residues include H178 and E180.

Heterodimer of HisH and HisF.

The protein resides in the cytoplasm. It catalyses the reaction 5-[(5-phospho-1-deoxy-D-ribulos-1-ylimino)methylamino]-1-(5-phospho-beta-D-ribosyl)imidazole-4-carboxamide + L-glutamine = D-erythro-1-(imidazol-4-yl)glycerol 3-phosphate + 5-amino-1-(5-phospho-beta-D-ribosyl)imidazole-4-carboxamide + L-glutamate + H(+). The enzyme catalyses L-glutamine + H2O = L-glutamate + NH4(+). Its pathway is amino-acid biosynthesis; L-histidine biosynthesis; L-histidine from 5-phospho-alpha-D-ribose 1-diphosphate: step 5/9. In terms of biological role, IGPS catalyzes the conversion of PRFAR and glutamine to IGP, AICAR and glutamate. The HisH subunit catalyzes the hydrolysis of glutamine to glutamate and ammonia as part of the synthesis of IGP and AICAR. The resulting ammonia molecule is channeled to the active site of HisF. The chain is Imidazole glycerol phosphate synthase subunit HisH from Salmonella choleraesuis (strain SC-B67).